The chain runs to 217 residues: MSKLPFLSRAAFARITTPIARGLLRVGLTPDVVTILGTTASVAGALTLFPMGKLFAGACVVWFFVLFDMLDGAMARERGGGTRFGAVLDATCDRISDGAVFCGLLWWIAFHMRDRPLVIATLICLVTSQVISYIKARAEASGLRGDGGFIERPERLIIVLTGAGVSDFPFVPWPPALSVGMWLLAVASVITCVQRLHTVWTSPGAIDRMAIPGKGDR.

A run of 2 helical transmembrane segments spans residues 28–49 (LTPD…LTLF) and 55–74 (FAGA…DGAM). 31–34 (DVVT) is a binding site for a CDP-1,2-diacyl-sn-glycerol. Positions 68 and 71 each coordinate Mg(2+). A CDP-1,2-diacyl-sn-glycerol contacts are provided by Gly72, Arg76, and Thr82. The Mg(2+) site is built by Asp89 and Asp93. Asp93 acts as the Proton acceptor in catalysis. The next 4 membrane-spanning stretches (helical) occupy residues 95–112 (ISDG…AFHM), 118–136 (VIAT…YIKA), 156–173 (LIIV…FVPW), and 179–200 (VGMW…HTVW).

It belongs to the CDP-alcohol phosphatidyltransferase class-I family. In terms of assembly, homodimer. Mg(2+) is required as a cofactor.

The protein localises to the cell membrane. It carries out the reaction a CDP-1,2-diacyl-sn-glycerol + 1D-myo-inositol 3-phosphate = a 1,2-diacyl-sn-glycero-3-phospho-(1D-myo-inositol-3-phosphate) + CMP + H(+). The catalysed reaction is 1,2-di-(9Z-octadecenoyl)-sn-glycero-3-cytidine-5'-diphosphate + 1D-myo-inositol 3-phosphate = 1,2-di-(9Z-octadecenoyl)-sn-glycero-3-phospho-(1D-myo-inositol-3-phosphate) + CMP + H(+). It functions in the pathway phospholipid metabolism; phosphatidylinositol phosphate biosynthesis. With respect to regulation, competitively inhibited by several inositol 1-phosphate analogs, including the phosphonate analog 1-deoxy-1-phosphonomethyl-myo-inositol (Ino-C-P). Its function is as follows. Catalyzes the conjugation of the 1'-hydroxyl group of D-myo-inositol-3-phosphate (also named L-myo-inositol-1-phosphate) with a lipid tail of cytidine diphosphate diacylglycerol (CDP-DAG), forming phosphatidylinositol phosphate (PIP) and CMP. PIP is a precursor of phosphatidylinositol (PI) which is an essential lipid for mycobacteria required for formation of their cell wall. This chain is Phosphatidylinositol phosphate synthase, found in Mycobacterium bovis (strain BCG / Pasteur 1173P2).